Here is a 180-residue protein sequence, read N- to C-terminus: Inner membrane-spanning protein YciB (180 aa).

5 helical membrane-spanning segments follow: residues Ile-22–Leu-42, Met-50–Asn-70, Trp-76–Leu-96, Ala-121–Leu-141, and Phe-149–Ile-169.

It belongs to the YciB family.

It is found in the cell inner membrane. Its function is as follows. Plays a role in cell envelope biogenesis, maintenance of cell envelope integrity and membrane homeostasis. The chain is Inner membrane-spanning protein YciB from Edwardsiella ictaluri (strain 93-146).